The following is a 164-amino-acid chain: Peptide methionine sulfoxide reductase MsrA (164 aa).

Cys16 is a catalytic residue.

It belongs to the MsrA Met sulfoxide reductase family.

The enzyme catalyses L-methionyl-[protein] + [thioredoxin]-disulfide + H2O = L-methionyl-(S)-S-oxide-[protein] + [thioredoxin]-dithiol. The catalysed reaction is [thioredoxin]-disulfide + L-methionine + H2O = L-methionine (S)-S-oxide + [thioredoxin]-dithiol. In terms of biological role, has an important function as a repair enzyme for proteins that have been inactivated by oxidation. Catalyzes the reversible oxidation-reduction of methionine sulfoxide in proteins to methionine. The protein is Peptide methionine sulfoxide reductase MsrA of Methanoculleus marisnigri (strain ATCC 35101 / DSM 1498 / JR1).